The following is a 709-amino-acid chain: Acyl-coenzyme A oxidase 4 (709 aa).

The span at 1–12 shows a compositional bias: polar residues; that stretch reads MTFTKKNVSVSQ. Positions 1-29 are disordered; the sequence is MTFTKKNVSVSQGPDPRSSIQKERDSSKW.

This sequence belongs to the acyl-CoA oxidase family. Homooctamer. Requires FAD as cofactor.

The protein localises to the peroxisome. The enzyme catalyses a 2,3-saturated acyl-CoA + O2 = a (2E)-enoyl-CoA + H2O2. It functions in the pathway lipid metabolism; peroxisomal fatty acid beta-oxidation. The polypeptide is Acyl-coenzyme A oxidase 4 (POX4) (Candida tropicalis (Yeast)).